Consider the following 575-residue polypeptide: Alpha-(1,6)-fucosyltransferase (575 aa).

Topologically, residues 1-9 (MRAWTGSWR) are cytoplasmic. The chain crosses the membrane as a helical; Signal-anchor for type II membrane protein span at residues 10 to 30 (WIMLILFAWGTLLFYIGGHLV). The Lumenal segment spans residues 31 to 575 (RDNDHPDHSS…KYPTYPEAEK (545 aa)). Cystine bridges form between C204-C266, C212-C230, and C218-C222. A GT23 domain is found at 206-493 (KARKLVCNIN…PDASANFHSL (288 aa)). The residue at position 278 (S278) is a Phosphoserine. Positions 299–305 (PRPPYLP) match the SH3-binding motif. Positions 365 to 366 (RR) are important for donor substrate binding. A disulfide bridge connects residues C465 and C472. An SH3 domain is found at 502–563 (QNAHNQIAVY…PSYKVREKIE (62 aa)).

This sequence belongs to the glycosyltransferase 23 family. In terms of processing, tyrosine phosphorylated by PKDCC/VLK.

Its subcellular location is the golgi apparatus. The protein resides in the golgi stack membrane. The enzyme catalyses N(4)-{beta-D-GlcNAc-(1-&gt;2)-alpha-D-Man-(1-&gt;3)-[beta-D-GlcNAc-(1-&gt;2)-alpha-D-Man-(1-&gt;6)]-beta-D-Man-(1-&gt;4)-beta-D-GlcNAc-(1-&gt;4)-beta-D-GlcNAc}-L-asparaginyl-[protein] + GDP-beta-L-fucose = an N(4)-{beta-D-GlcNAc-(1-&gt;2)-alpha-D-Man-(1-&gt;3)-[beta-D-GlcNAc-(1-&gt;2)-alpha-D-Man-(1-&gt;6)]-beta-D-Man-(1-&gt;4)-beta-D-GlcNAc-(1-&gt;4)-[alpha-L-Fuc-(1-&gt;6)]-beta-D-GlcNAc}-L-asparaginyl-[protein] + GDP + H(+). It functions in the pathway protein modification; protein glycosylation. In terms of biological role, catalyzes the addition of fucose in alpha 1-6 linkage to the first GlcNAc residue, next to the peptide chains in N-glycans. This is Alpha-(1,6)-fucosyltransferase (Fut8) from Mus musculus (Mouse).